Consider the following 1048-residue polypeptide: 3-hydroxy-3-methylglutaryl-coenzyme A reductase (1048 aa).

At 1-32 (MDPVVKKPSPGGVQHRVTKGLRAIVGHACRHP) the chain is on the cytoplasmic side. A helical transmembrane segment spans residues 33–53 (IHTLLVTALTAATTHLHVLEG). The Lumenal segment spans residues 54–220 (TYQAAHRGLA…FLHRVKHAET (167 aa)). A helical membrane pass occupies residues 221-241 (VDLVIIGLSYLAMNMTVVSLF). An SSD domain is found at 222 to 403 (DLVIIGLSYL…FTFYATILCV (182 aa)). The Cytoplasmic portion of the chain corresponds to 242 to 250 (RVMRQLGSR). Residues 251-271 (FWLATSVLLSGAFAFVLGLGI) traverse the membrane as a helical segment. The Lumenal segment spans residues 272–276 (TTTCD). A helical membrane pass occupies residues 277 to 297 (VPVDMLLLFEGIPYLVLTVGF). The Cytoplasmic segment spans residues 298-348 (EKPIQLTRAVLCVSEELRGGWQRPVPNGASSDDSRQSQLIPNIIQLAVDRE). Residues 349–369 (GWYIVRSYLLEIGALALGAVL) traverse the membrane as a helical segment. Topologically, residues 370–377 (RPNDSLGH) are lumenal. N-linked (GlcNAc...) asparagine glycosylation occurs at Asn372. Residues 378 to 398 (FCFLAAWTLLIDAILLFTFYA) traverse the membrane as a helical segment. At 399–439 (TILCVKLEITRIRSPGGLGQVNAKHPSGIFGHKVKSTNITW) the chain is on the cytoplasmic side. Residues 440-460 (WKLLTVGGFVLCHFLQLSPFF) traverse the membrane as a helical segment. At 461-542 (YRVMGEYMAN…LDGLESPLGR (82 aa)) the chain is on the lumenal side. N-linked (GlcNAc...) asparagine glycosylation is found at Asn470 and Asn520. The chain crosses the membrane as a helical span at residues 543–563 (LCLMGALVVSLVLNNHLIHAA). Residues 564-1048 (RWHAWPQARE…NRSAGATVKK (485 aa)) are Cytoplasmic-facing. The Charge relay system role is filled by Glu729. Residue 735 to 741 (SASRGCK) coordinates CoA. NADP(+)-binding positions include 796 to 798 (SRF) and 823 to 831 (DAMGMNMIS). Lys863 acts as the Charge relay system in catalysis. 892 to 894 (VLK) lines the CoA pocket. The active-site Charge relay system is the Asp939. 1034–1035 (AH) lines the CoA pocket. His1035 acts as the Proton donor in catalysis. 1039–1040 (NR) contacts NADP(+).

Belongs to the HMG-CoA reductase family.

The protein resides in the endoplasmic reticulum membrane. It catalyses the reaction (R)-mevalonate + 2 NADP(+) + CoA = (3S)-3-hydroxy-3-methylglutaryl-CoA + 2 NADPH + 2 H(+). Its pathway is metabolic intermediate biosynthesis; (R)-mevalonate biosynthesis; (R)-mevalonate from acetyl-CoA: step 3/3. Its function is as follows. HMG-CoA reductase; part of the first module of ergosterol biosynthesis pathway that includes the early steps of the pathway, conserved across all eukaryotes, and which results in the formation of mevalonate from acetyl-coenzyme A (acetyl-CoA). In this module, the cytosolic acetyl-CoA acetyltransferase catalyzes the formation of acetoacetyl-CoA. The hydroxymethylglutaryl-CoA synthase then condenses acetyl-CoA with acetoacetyl-CoA to form HMG-CoA. The rate-limiting step of the early module is the reduction to mevalonate by the 3-hydroxy-3-methylglutaryl-coenzyme A (HMG-CoA) reductase. This Aspergillus terreus (strain NIH 2624 / FGSC A1156) protein is 3-hydroxy-3-methylglutaryl-coenzyme A reductase.